Here is a 394-residue protein sequence, read N- to C-terminus: Elongation factor Tu (394 aa).

In terms of domain architecture, tr-type G spans 10–204 (RTHINVGTIG…ILDNYIPEPK (195 aa)). Residues 19 to 26 (GHVDHGKT) form a G1 region. Residue 19 to 26 (GHVDHGKT) participates in GTP binding. T26 serves as a coordination point for Mg(2+). Residues 60–64 (GITIN) form a G2 region. A G3 region spans residues 81-84 (DCPG). GTP is bound by residues 81 to 85 (DCPGH) and 136 to 139 (NKCD). The interval 136–139 (NKCD) is G4. The G5 stretch occupies residues 174–176 (SAL).

Belongs to the TRAFAC class translation factor GTPase superfamily. Classic translation factor GTPase family. EF-Tu/EF-1A subfamily. In terms of assembly, monomer.

The protein localises to the cytoplasm. The catalysed reaction is GTP + H2O = GDP + phosphate + H(+). Its function is as follows. GTP hydrolase that promotes the GTP-dependent binding of aminoacyl-tRNA to the A-site of ribosomes during protein biosynthesis. The protein is Elongation factor Tu of Blochmanniella floridana.